A 251-amino-acid polypeptide reads, in one-letter code: Indole-3-glycerol phosphate synthase (251 aa).

The segment covering Met1 to Gln12 has biased composition (polar residues). The disordered stretch occupies residues Met1–Arg27.

Belongs to the TrpC family.

The catalysed reaction is 1-(2-carboxyphenylamino)-1-deoxy-D-ribulose 5-phosphate + H(+) = (1S,2R)-1-C-(indol-3-yl)glycerol 3-phosphate + CO2 + H2O. Its pathway is amino-acid biosynthesis; L-tryptophan biosynthesis; L-tryptophan from chorismate: step 4/5. The protein is Indole-3-glycerol phosphate synthase of Halobacterium salinarum (strain ATCC 700922 / JCM 11081 / NRC-1) (Halobacterium halobium).